A 436-amino-acid polypeptide reads, in one-letter code: Glutamate-1-semialdehyde 2,1-aminomutase (436 aa).

N6-(pyridoxal phosphate)lysine is present on Lys-269.

Belongs to the class-III pyridoxal-phosphate-dependent aminotransferase family. HemL subfamily. As to quaternary structure, homodimer. Pyridoxal 5'-phosphate serves as cofactor.

Its subcellular location is the cytoplasm. It carries out the reaction (S)-4-amino-5-oxopentanoate = 5-aminolevulinate. It participates in porphyrin-containing compound metabolism; protoporphyrin-IX biosynthesis; 5-aminolevulinate from L-glutamyl-tRNA(Glu): step 2/2. Its pathway is porphyrin-containing compound metabolism; chlorophyll biosynthesis. The chain is Glutamate-1-semialdehyde 2,1-aminomutase from Heliobacterium modesticaldum (strain ATCC 51547 / Ice1).